The sequence spans 954 residues: Valine--tRNA ligase (954 aa).

Positions 48–58 match the 'HIGH' region motif; that stretch reads PNVTGSLHMGH. The 'KMSKS' region signature appears at 560-564; that stretch reads KMSKS. Residue Lys563 coordinates ATP. Residues 883–953 adopt a coiled-coil conformation; it reads AGFINKEAEL…IQEQYKAIEA (71 aa).

It belongs to the class-I aminoacyl-tRNA synthetase family. ValS type 1 subfamily. Monomer.

It is found in the cytoplasm. The catalysed reaction is tRNA(Val) + L-valine + ATP = L-valyl-tRNA(Val) + AMP + diphosphate. Its function is as follows. Catalyzes the attachment of valine to tRNA(Val). As ValRS can inadvertently accommodate and process structurally similar amino acids such as threonine, to avoid such errors, it has a 'posttransfer' editing activity that hydrolyzes mischarged Thr-tRNA(Val) in a tRNA-dependent manner. This is Valine--tRNA ligase from Haemophilus influenzae (strain PittEE).